Here is a 961-residue protein sequence, read N- to C-terminus: Thrombospondin-4 (961 aa).

The first 23 residues, 1-23 (MLAPRGATFLLLHLALQPWLGAG), serve as a signal peptide directing secretion. Residues 24-192 (AQATPQVFDL…LEELKLVVRG (169 aa)) enclose the Laminin G-like domain. Residues 286–325 (PVRRCDSNPCFRGVRCTDTRDGFQCGPCPEGYTGNGIVCS) enclose the EGF-like 1 domain. Disulfide bonds link cysteine 290/cysteine 301, cysteine 295/cysteine 310, cysteine 313/cysteine 324, cysteine 330/cysteine 341, cysteine 335/cysteine 350, cysteine 353/cysteine 377, cysteine 383/cysteine 394, cysteine 388/cysteine 403, cysteine 406/cysteine 418, cysteine 424/cysteine 438, cysteine 432/cysteine 448, cysteine 450/cysteine 461, cysteine 477/cysteine 482, cysteine 487/cysteine 507, cysteine 523/cysteine 543, cysteine 546/cysteine 566, cysteine 582/cysteine 602, cysteine 605/cysteine 625, cysteine 643/cysteine 663, cysteine 683/cysteine 703, and cysteine 719/cysteine 940. An EGF-like 2; calcium-binding domain is found at 326-363 (DVDECRYHPCYPGVRCVNLAPGFRCDACPVGFTGPMMQ). The EGF-like 3; calcium-binding domain maps to 379 to 419 (DIDECRNGACVLNSICINTLGSYRCGPCKPGYIGDQMRGCK). The region spanning 420–462 (MERNCRDPELNPCSVNAQCIEERQGDVTCVCGVGWAGDGYICG) is the EGF-like 4 domain. 8 TSP type-3 repeats span residues 463 to 495 (KDVDIDSYPDEELPCSARNCKKDNCKYVPNSGQ), 496 to 531 (EDADRDGIGDACDDDADGDGILNEQDNCVLTHNVDQ), 532 to 554 (RNSDKDIFGDACDNCRNVLNNDQ), 555 to 590 (KDTDGDGKGDACDDDMDGDGIKNILDNCQKVPNSDQ), 591 to 613 (EDRDGDGVGDACDSCPEVSNPNQ), 614 to 651 (SDVDNDLVGDSCDTNQDSDGDGHQDSTDNCPTVINSAQ), 652 to 691 (LDTDKDGIGDECDDDDDNDGIPDLVPPGPDNCRLVPNPAQ), and 692 to 727 (EDSNSDGVGDICEADFDQDQVIDRIDVCPENAEVTL). Residues 562-564 (KGD) carry the Cell attachment site motif. The segment at 581–671 (NCQKVPNSDQ…ECDDDDDNDG (91 aa)) is disordered. Residue asparagine 612 is glycosylated (N-linked (GlcNAc...) asparagine). A compositionally biased stretch (polar residues) spans 640–652 (TDNCPTVINSAQL). Acidic residues predominate over residues 660 to 671 (GDECDDDDDNDG). The TSP C-terminal domain occupies 731–945 (RAYQTVVLDP…LKYRCNDTIP (215 aa)). Residue asparagine 941 is glycosylated (N-linked (GlcNAc...) asparagine).

Belongs to the thrombospondin family. Homopentamer; disulfide-linked. Interacts with PTBP3. Interacts (via EGF-like 3; calcium-binding domain) with ATF6 and facilitates its processing, activation and nuclear translocation. Interacts with NOTCH1.

The protein localises to the endoplasmic reticulum. Its subcellular location is the sarcoplasmic reticulum. It localises to the secreted. It is found in the extracellular space. The protein resides in the extracellular matrix. Functionally, adhesive glycoprotein that mediates cell-to-cell and cell-to-matrix interactions and is involved in various processes including cellular proliferation, migration, adhesion and attachment, inflammatory response to CNS injury, regulation of vascular inflammation and adaptive responses of the heart to pressure overload and in myocardial function and remodeling. Binds to structural extracellular matrix (ECM) proteins and modulates the ECM in response to tissue damage, contributing to cardioprotective and adaptive ECM remodeling. Plays a role in ER stress response, via its interaction with the activating transcription factor 6 alpha (ATF6) which produces adaptive ER stress response factors and protects myocardium from pressure overload. May contribute to spinal presynaptic hypersensitivity and neuropathic pain states after peripheral nerve injury. May play a role in regulating protective astrogenesis from the subventricular zone (SVZ) niche after injury in a NOTCH1-dependent manner. The protein is Thrombospondin-4 (THBS4) of Bos taurus (Bovine).